A 144-amino-acid polypeptide reads, in one-letter code: Endoribonuclease YbeY (144 aa).

Positions 104, 108, and 114 each coordinate Zn(2+).

It belongs to the endoribonuclease YbeY family. Zn(2+) is required as a cofactor.

The protein localises to the cytoplasm. Functionally, single strand-specific metallo-endoribonuclease involved in late-stage 70S ribosome quality control and in maturation of the 3' terminus of the 16S rRNA. This chain is Endoribonuclease YbeY, found in Nitratiruptor sp. (strain SB155-2).